A 423-amino-acid chain; its full sequence is tRNA(Ile2) 2-agmatinylcytidine synthetase TiaS (423 aa).

A DNA-binding region (OB) is located at residues 273–347; sequence VIVYGRVVEE…GINIEKIKIL (75 aa).

It belongs to the TiaS family.

It is found in the cytoplasm. The catalysed reaction is cytidine(34) in tRNA(Ile2) + agmatine + ATP + H2O = 2-agmatinylcytidine(34) in tRNA(Ile2) + AMP + 2 phosphate + 2 H(+). In terms of biological role, ATP-dependent agmatine transferase that catalyzes the formation of 2-agmatinylcytidine (agm2C) at the wobble position (C34) of tRNA(Ile2), converting the codon specificity from AUG to AUA. The polypeptide is tRNA(Ile2) 2-agmatinylcytidine synthetase TiaS (Methanocaldococcus jannaschii (strain ATCC 43067 / DSM 2661 / JAL-1 / JCM 10045 / NBRC 100440) (Methanococcus jannaschii)).